Here is a 380-residue protein sequence, read N- to C-terminus: Queuine tRNA-ribosyltransferase (380 aa).

The Proton acceptor role is filled by Asp95. Substrate is bound by residues 95–99 (DSGGF), Asp149, Gln192, and Gly219. The interval 250-256 (GVGSADA) is RNA binding. Residue Asp269 is the Nucleophile of the active site. An RNA binding; important for wobble base 34 recognition region spans residues 274-278 (TRIAR). Cys307, Cys309, Cys312, and His338 together coordinate Zn(2+).

It belongs to the queuine tRNA-ribosyltransferase family. As to quaternary structure, homodimer. Within each dimer, one monomer is responsible for RNA recognition and catalysis, while the other monomer binds to the replacement base PreQ1. The cofactor is Zn(2+).

The enzyme catalyses 7-aminomethyl-7-carbaguanine + guanosine(34) in tRNA = 7-aminomethyl-7-carbaguanosine(34) in tRNA + guanine. It functions in the pathway tRNA modification; tRNA-queuosine biosynthesis. Catalyzes the base-exchange of a guanine (G) residue with the queuine precursor 7-aminomethyl-7-deazaguanine (PreQ1) at position 34 (anticodon wobble position) in tRNAs with GU(N) anticodons (tRNA-Asp, -Asn, -His and -Tyr). Catalysis occurs through a double-displacement mechanism. The nucleophile active site attacks the C1' of nucleotide 34 to detach the guanine base from the RNA, forming a covalent enzyme-RNA intermediate. The proton acceptor active site deprotonates the incoming PreQ1, allowing a nucleophilic attack on the C1' of the ribose to form the product. After dissociation, two additional enzymatic reactions on the tRNA convert PreQ1 to queuine (Q), resulting in the hypermodified nucleoside queuosine (7-(((4,5-cis-dihydroxy-2-cyclopenten-1-yl)amino)methyl)-7-deazaguanosine). The polypeptide is Queuine tRNA-ribosyltransferase (Lactiplantibacillus plantarum (strain ATCC BAA-793 / NCIMB 8826 / WCFS1) (Lactobacillus plantarum)).